Here is a 546-residue protein sequence, read N- to C-terminus: DDB1- and CUL4-associated factor 11 (546 aa).

Low complexity predominate over residues 1–19; it reads MGSRNSSSAGSGSGDPSEG. The disordered stretch occupies residues 1 to 40; that stretch reads MGSRNSSSAGSGSGDPSEGLPRRGAGLRRSEEEEEEDEDV. Residues Leu-49 and Ser-75 each carry the phosphoserine modification. WD repeat units follow at residues 170–210, 216–258, 263–302, 305–345, 353–392, 435–480, and 481–520; these read SYSQ…RKFK, DVGW…TALD, ERRF…RTLQ, SHED…EDDP, GHQD…SREG, GVLH…KKLT, and NHKA…YFQD. The segment at 523–546 is disordered; the sequence is PESEECASAPAPVPQSSTPFSSPQ. The segment covering 536-546 has biased composition (polar residues); it reads PQSSTPFSSPQ.

Interacts with DDB1 and CUL4A.

It participates in protein modification; protein ubiquitination. Functionally, may function as a substrate receptor for CUL4-DDB1 E3 ubiquitin-protein ligase complex. The sequence is that of DDB1- and CUL4-associated factor 11 (DCAF11) from Homo sapiens (Human).